The sequence spans 112 residues: DNA-binding protein PF1087 (112 aa).

Belongs to the PDCD5 family.

The protein is DNA-binding protein PF1087 of Pyrococcus furiosus (strain ATCC 43587 / DSM 3638 / JCM 8422 / Vc1).